The sequence spans 559 residues: MNHLGNVKYLVIVFLIFFDLFLVNGRDVQNNIVDEIKYSEEVCNDQVDLYLLMDCSGSIRRHNWVNHAVPLAMKLIQQLNLNDNAIHLYVNVFSNNAKEIIRLHSDASKNKEKALIIIRSLLSTNLPYGRTNLTDALLQVRKHLNDRINRENANQLVVILTDGIPDSIQDSLKESRKLSDRGVKIAVFGIGQGINVAFNRFLVGCHPSDGKCNLYADSAWENVKNVIGPFMKAVCVEVEKTASCGVWDEWSPCSVTCGKGTRSRKREILHEGCTSEIQEQCEEERCPPKWEPLDVPDEPEDDQPRPRGDNSSVQKPEENIIDNNPQEPSPNPEEGKDENPNGFDLDENPENPPNPDIPEQKPNIPEDSEKEVPSDVPKNPEDDREENFDIPKKPENKHDNQNNLPNDKSDRNIPYSPLPPKVLDNERKQSDPQSQDNNGNRHVPNSEDRETRPHGRNNENRSYNRKYNDTPKHPEREEHEKPDNNKKKGESDNKYKIAGGIAGGLALLACAGLAYKFVVPGAATPYAGEPAPFDETLGEEDKDLDEPEQFRLPEENEWN.

Residues 1–25 form the signal peptide; that stretch reads MNHLGNVKYLVIVFLIFFDLFLVNG. At 26 to 496 the chain is on the extracellular side; sequence RDVQNNIVDE…KKGESDNKYK (471 aa). Positions 48 to 234 constitute a VWFA domain; the sequence is DLYLLMDCSG…NVIGPFMKAV (187 aa). Isoglutamyl lysine isopeptide (Gln-Lys) (interchain with K-? in Factor 3(A)) cross-links involve residues Q77 and Q78. An N-linked (GlcNAc...) asparagine glycan is attached at N132. The 47-residue stretch at 241–287 folds into the TSP type-1 domain; sequence TASCGVWDEWSPCSVTCGKGTRSRKREILHEGCTSEIQEQCEEERCP. Disulfide bonds link C244–C273, C253–C281, and C257–C286. Residues 280 to 496 form a disordered region; sequence QCEEERCPPK…KKGESDNKYK (217 aa). Over residues 283–292 the composition is skewed to basic and acidic residues; it reads EERCPPKWEP. Residues 307-309 carry the Cell attachment site motif; the sequence is RGD. N310 carries an N-linked (GlcNAc...) asparagine glycan. The span at 370 to 400 shows a compositional bias: basic and acidic residues; it reads KEVPSDVPKNPEDDREENFDIPKKPENKHDN. The segment covering 431-440 has biased composition (polar residues); it reads DPQSQDNNGN. Over residues 444 to 459 the composition is skewed to basic and acidic residues; the sequence is PNSEDRETRPHGRNNE. The N-linked (GlcNAc...) asparagine glycan is linked to N460. Residues 466–495 are compositionally biased toward basic and acidic residues; sequence KYNDTPKHPEREEHEKPDNNKKKGESDNKY. The helical transmembrane segment at 497-515 threads the bilayer; sequence IAGGIAGGLALLACAGLAY. Residues 516–559 are Cytoplasmic-facing; that stretch reads KFVVPGAATPYAGEPAPFDETLGEEDKDLDEPEQFRLPEENEWN. A disordered region spans residues 523–559; that stretch reads ATPYAGEPAPFDETLGEEDKDLDEPEQFRLPEENEWN. Acidic residues predominate over residues 536 to 547; it reads TLGEEDKDLDEP. A compositionally biased stretch (basic and acidic residues) spans 548–559; the sequence is EQFRLPEENEWN.

Its subcellular location is the cell membrane. In Plasmodium falciparum, this protein is Thrombospondin-related anonymous protein (TRAP).